A 338-amino-acid polypeptide reads, in one-letter code: Phosphoribosylformylglycinamidine cyclo-ligase (338 aa).

It belongs to the AIR synthase family.

It localises to the cytoplasm. It catalyses the reaction 2-formamido-N(1)-(5-O-phospho-beta-D-ribosyl)acetamidine + ATP = 5-amino-1-(5-phospho-beta-D-ribosyl)imidazole + ADP + phosphate + H(+). It participates in purine metabolism; IMP biosynthesis via de novo pathway; 5-amino-1-(5-phospho-D-ribosyl)imidazole from N(2)-formyl-N(1)-(5-phospho-D-ribosyl)glycinamide: step 2/2. In Lactococcus lactis subsp. lactis (strain IL1403) (Streptococcus lactis), this protein is Phosphoribosylformylglycinamidine cyclo-ligase.